The sequence spans 920 residues: Isoleucine--tRNA ligase (920 aa).

The 'HIGH' region motif lies at Pro58–His68. Glu569 is an L-isoleucyl-5'-AMP binding site. The 'KMSKS' region signature appears at Lys610–Ser614. Lys613 is an ATP binding site. Zn(2+)-binding residues include Cys895, Cys898, Cys910, and Cys913.

It belongs to the class-I aminoacyl-tRNA synthetase family. IleS type 1 subfamily. Monomer. The cofactor is Zn(2+).

Its subcellular location is the cytoplasm. The catalysed reaction is tRNA(Ile) + L-isoleucine + ATP = L-isoleucyl-tRNA(Ile) + AMP + diphosphate. Its function is as follows. Catalyzes the attachment of isoleucine to tRNA(Ile). As IleRS can inadvertently accommodate and process structurally similar amino acids such as valine, to avoid such errors it has two additional distinct tRNA(Ile)-dependent editing activities. One activity is designated as 'pretransfer' editing and involves the hydrolysis of activated Val-AMP. The other activity is designated 'posttransfer' editing and involves deacylation of mischarged Val-tRNA(Ile). This is Isoleucine--tRNA ligase from Helicobacter pylori (strain P12).